The chain runs to 38 residues: ATP synthase subunit O, mitochondrial (38 aa).

Belongs to the ATPase delta chain family. In terms of assembly, F-type ATPases have 2 components, CF(1) - the catalytic core - and CF(0) - the membrane proton channel. CF(1) has five subunits: alpha(3), beta(3), gamma(1), delta(1), epsilon(1). CF(0) has three main subunits: a, b and c.

Its subcellular location is the mitochondrion. The protein resides in the mitochondrion inner membrane. Functionally, mitochondrial membrane ATP synthase (F(1)F(0) ATP synthase or Complex V) produces ATP from ADP in the presence of a proton gradient across the membrane which is generated by electron transport complexes of the respiratory chain. F-type ATPases consist of two structural domains, F(1) - containing the extramembraneous catalytic core and F(0) - containing the membrane proton channel, linked together by a central stalk and a peripheral stalk. During catalysis, ATP synthesis in the catalytic domain of F(1) is coupled via a rotary mechanism of the central stalk subunits to proton translocation. Part of the complex F(0) domain and the peripheric stalk, which acts as a stator to hold the catalytic alpha(3)beta(3) subcomplex and subunit a/ATP6 static relative to the rotary elements. The protein is ATP synthase subunit O, mitochondrial of Pisum sativum (Garden pea).